A 610-amino-acid chain; its full sequence is Elongation factor 4 (610 aa).

Positions 11 to 193 constitute a tr-type G domain; it reads EKIRNFSIIA…QIVEKVPAPT (183 aa). Residues 23–28 and 140–143 each bind GTP; these read DHGKST and NKID.

This sequence belongs to the TRAFAC class translation factor GTPase superfamily. Classic translation factor GTPase family. LepA subfamily.

It is found in the cell membrane. It catalyses the reaction GTP + H2O = GDP + phosphate + H(+). Its function is as follows. Required for accurate and efficient protein synthesis under certain stress conditions. May act as a fidelity factor of the translation reaction, by catalyzing a one-codon backward translocation of tRNAs on improperly translocated ribosomes. Back-translocation proceeds from a post-translocation (POST) complex to a pre-translocation (PRE) complex, thus giving elongation factor G a second chance to translocate the tRNAs correctly. Binds to ribosomes in a GTP-dependent manner. In Streptococcus pyogenes serotype M6 (strain ATCC BAA-946 / MGAS10394), this protein is Elongation factor 4.